Consider the following 185-residue polypeptide: Neuronal vesicle trafficking-associated protein 1 (185 aa).

Residues 1–82 (MVKLGNNFAE…ITEGVTERFK (82 aa)) lie on the Cytoplasmic side of the membrane. The chain crosses the membrane as a helical; Signal-anchor for type II membrane protein span at residues 83–103 (VSVLVLFALAFLTCVVFLVVY). Over 104–185 (KVYKYDRACP…QETEAAEKSA (82 aa)) the chain is Lumenal. The required for GRIP1 interaction stretch occupies residues 129 to 164 (ESYYTEQDSSAREKFYTVINHYNLAKQSITRSVSPW).

The protein belongs to the NSG family. As to quaternary structure, forms a complex with GRIP1, GRIA2 and STX12; controls the intracellular fate of AMPAR and the endosomal sorting of the GRIA2 subunit toward recycling and membrane targeting. Interacts with GRIP1. Interacts with STX12. Interacts with APP; could regulate APP processing. Interacts with FAM171A1. As to expression, widely expressed in brain and spinal cord. Expressed in neurons during maturation and synapse formation.

It is found in the membrane. Its subcellular location is the golgi apparatus. The protein resides in the trans-Golgi network membrane. The protein localises to the endosome membrane. It localises to the cell projection. It is found in the dendrite. Its subcellular location is the early endosome membrane. The protein resides in the late endosome membrane. The protein localises to the lysosome lumen. It localises to the recycling endosome membrane. It is found in the cytoplasmic vesicle membrane. Its subcellular location is the golgi stack membrane. The protein resides in the endosome. The protein localises to the multivesicular body membrane. It localises to the endoplasmic reticulum membrane. Functionally, plays a role in the recycling mechanism in neurons of multiple receptors, including AMPAR, APP and L1CAM and acts at the level of early endosomes to promote sorting of receptors toward a recycling pathway. Regulates sorting and recycling of GRIA2 through interaction with GRIP1 and then contributes to the regulation of synaptic transmission and plasticity by affecting the recycling and targeting of AMPA receptors to the synapse. Is required for faithful sorting of L1CAM to axons by facilitating trafficking from somatodendritic early endosome or the recycling endosome. In an other hand, induces apoptosis via the activation of CASP3 in response to DNA damage. This Rattus norvegicus (Rat) protein is Neuronal vesicle trafficking-associated protein 1.